A 184-amino-acid chain; its full sequence is Photosystem I assembly protein Ycf4 (184 aa).

Helical transmembrane passes span 19 to 39 and 57 to 77; these read ISNF…VLVG and ILFF…LFIS.

Belongs to the Ycf4 family.

It is found in the plastid. Its subcellular location is the chloroplast thylakoid membrane. Functionally, seems to be required for the assembly of the photosystem I complex. The sequence is that of Photosystem I assembly protein Ycf4 from Eucalyptus globulus subsp. globulus (Tasmanian blue gum).